The sequence spans 481 residues: UDP-glucose 6-dehydrogenase 1 (481 aa).

NAD(+) is bound by residues 8-13, D33, R38, 86-90, 127-128, and E162; these read GAGYVG, VNTPT, and ST. Residues 158–162, 217–224, and 257–270 contribute to the substrate site; these read EFLAE, KLAANAFL, and RIGA…VGFG. C273 functions as the Nucleophile in the catalytic mechanism. NAD(+) is bound at residue 273–276; that stretch reads CFQK. 335–336 provides a ligand contact to substrate; it reads FK. Position 343 (R343) interacts with NAD(+). S394 carries the phosphoserine modification. Substrate is bound at residue R448.

This sequence belongs to the UDP-glucose/GDP-mannose dehydrogenase family.

It carries out the reaction UDP-alpha-D-glucose + 2 NAD(+) + H2O = UDP-alpha-D-glucuronate + 2 NADH + 3 H(+). It participates in nucleotide-sugar biosynthesis; UDP-alpha-D-glucuronate biosynthesis; UDP-alpha-D-glucuronate from UDP-alpha-D-glucose: step 1/1. Its function is as follows. Involved in the biosynthesis of UDP-glucuronic acid (UDP-GlcA), providing nucleotide sugars for cell-wall polymers. The polypeptide is UDP-glucose 6-dehydrogenase 1 (UGD1) (Oryza sativa subsp. japonica (Rice)).